The chain runs to 89 residues: Small ribosomal subunit protein uS15 (89 aa).

Belongs to the universal ribosomal protein uS15 family. Part of the 30S ribosomal subunit. Forms a bridge to the 50S subunit in the 70S ribosome, contacting the 23S rRNA.

Its function is as follows. One of the primary rRNA binding proteins, it binds directly to 16S rRNA where it helps nucleate assembly of the platform of the 30S subunit by binding and bridging several RNA helices of the 16S rRNA. Forms an intersubunit bridge (bridge B4) with the 23S rRNA of the 50S subunit in the ribosome. This is Small ribosomal subunit protein uS15 from Synechocystis sp. (strain ATCC 27184 / PCC 6803 / Kazusa).